Reading from the N-terminus, the 128-residue chain is Aspartate 1-decarboxylase (128 aa).

Catalysis depends on S25, which acts as the Schiff-base intermediate with substrate; via pyruvic acid. Pyruvic acid (Ser) is present on S25. Residue T57 participates in substrate binding. The Proton donor role is filled by Y58. 73 to 75 (GAA) serves as a coordination point for substrate.

It belongs to the PanD family. In terms of assembly, heterooctamer of four alpha and four beta subunits. Pyruvate serves as cofactor. In terms of processing, is synthesized initially as an inactive proenzyme, which is activated by self-cleavage at a specific serine bond to produce a beta-subunit with a hydroxyl group at its C-terminus and an alpha-subunit with a pyruvoyl group at its N-terminus.

Its subcellular location is the cytoplasm. The catalysed reaction is L-aspartate + H(+) = beta-alanine + CO2. The protein operates within cofactor biosynthesis; (R)-pantothenate biosynthesis; beta-alanine from L-aspartate: step 1/1. Functionally, catalyzes the pyruvoyl-dependent decarboxylation of aspartate to produce beta-alanine. This chain is Aspartate 1-decarboxylase, found in Caldicellulosiruptor bescii (strain ATCC BAA-1888 / DSM 6725 / KCTC 15123 / Z-1320) (Anaerocellum thermophilum).